We begin with the raw amino-acid sequence, 1373 residues long: DNA-directed RNA polymerase subunit beta (1373 aa).

Belongs to the RNA polymerase beta chain family. The RNAP catalytic core consists of 2 alpha, 1 beta, 1 beta' and 1 omega subunit. When a sigma factor is associated with the core the holoenzyme is formed, which can initiate transcription.

It carries out the reaction RNA(n) + a ribonucleoside 5'-triphosphate = RNA(n+1) + diphosphate. Functionally, DNA-dependent RNA polymerase catalyzes the transcription of DNA into RNA using the four ribonucleoside triphosphates as substrates. In Rickettsia conorii (strain ATCC VR-613 / Malish 7), this protein is DNA-directed RNA polymerase subunit beta.